The following is a 570-amino-acid chain: 2-succinyl-5-enolpyruvyl-6-hydroxy-3-cyclohexene-1-carboxylate synthase (570 aa).

It belongs to the TPP enzyme family. MenD subfamily. In terms of assembly, homodimer. Requires Mg(2+) as cofactor. Mn(2+) serves as cofactor. Thiamine diphosphate is required as a cofactor.

The catalysed reaction is isochorismate + 2-oxoglutarate + H(+) = 5-enolpyruvoyl-6-hydroxy-2-succinyl-cyclohex-3-ene-1-carboxylate + CO2. The protein operates within quinol/quinone metabolism; 1,4-dihydroxy-2-naphthoate biosynthesis; 1,4-dihydroxy-2-naphthoate from chorismate: step 2/7. It functions in the pathway quinol/quinone metabolism; menaquinone biosynthesis. Catalyzes the thiamine diphosphate-dependent decarboxylation of 2-oxoglutarate and the subsequent addition of the resulting succinic semialdehyde-thiamine pyrophosphate anion to isochorismate to yield 2-succinyl-5-enolpyruvyl-6-hydroxy-3-cyclohexene-1-carboxylate (SEPHCHC). This is 2-succinyl-5-enolpyruvyl-6-hydroxy-3-cyclohexene-1-carboxylate synthase from Vibrio cholerae serotype O1 (strain ATCC 39541 / Classical Ogawa 395 / O395).